Reading from the N-terminus, the 236-residue chain is 15,16-dihydrobiliverdin:ferredoxin oxidoreductase (236 aa).

It belongs to the HY2 family.

The catalysed reaction is 15,16-dihydrobiliverdin + oxidized 2[4Fe-4S]-[ferredoxin] = biliverdin IXalpha + reduced 2[4Fe-4S]-[ferredoxin] + 2 H(+). In terms of biological role, catalyzes the two-electron reduction of biliverdin IX-alpha at the C15 methine bridge. This is 15,16-dihydrobiliverdin:ferredoxin oxidoreductase from Prochlorococcus marinus (strain MIT 9515).